The primary structure comprises 373 residues: RNA 3'-terminal phosphate cyclase-like protein (373 aa).

It belongs to the RNA 3'-terminal cyclase family. Type 2 subfamily. In terms of assembly, part of the small subunit (SSU) processome, composed of more than 70 proteins and the RNA chaperone small nucleolar RNA (snoRNA) U3. Interacts with BMS1.

The protein localises to the nucleus. The protein resides in the nucleolus. Its function is as follows. As part of the small subunit (SSU) processome, it plays a role in 40S-ribosomal-subunit biogenesis in the early pre-rRNA processing steps at sites A0, A1 and A2 that are required for proper maturation of the 18S RNA. Activates BMS1 by promoting GDP/GTP exchange. Does not have cyclase activity. This Bos taurus (Bovine) protein is RNA 3'-terminal phosphate cyclase-like protein (RCL1).